A 594-amino-acid chain; its full sequence is UvrABC system protein C (594 aa).

The 78-residue stretch at 14-91 (DQPGCYLMKD…IKKYDPKYNI (78 aa)) folds into the GIY-YIG domain. One can recognise a UVR domain in the interval 196–231 (KEIRSELETKMYEASEKLEFERAKELRDQIAHIDAI).

This sequence belongs to the UvrC family. In terms of assembly, interacts with UvrB in an incision complex.

Its subcellular location is the cytoplasm. In terms of biological role, the UvrABC repair system catalyzes the recognition and processing of DNA lesions. UvrC both incises the 5' and 3' sides of the lesion. The N-terminal half is responsible for the 3' incision and the C-terminal half is responsible for the 5' incision. The sequence is that of UvrABC system protein C from Bacillus mycoides (strain KBAB4) (Bacillus weihenstephanensis).